We begin with the raw amino-acid sequence, 309 residues long: Tagatose-6-phosphate kinase (309 aa).

Belongs to the carbohydrate kinase PfkB family. LacC subfamily.

The enzyme catalyses D-tagatofuranose 6-phosphate + ATP = D-tagatofuranose 1,6-bisphosphate + ADP + H(+). Its pathway is carbohydrate metabolism; D-tagatose 6-phosphate degradation; D-glyceraldehyde 3-phosphate and glycerone phosphate from D-tagatose 6-phosphate: step 1/2. The chain is Tagatose-6-phosphate kinase from Streptococcus pyogenes serotype M1.